Reading from the N-terminus, the 206-residue chain is Small ribosomal subunit protein uS4 (206 aa).

Residues 18-45 are disordered; sequence NIWGRPKSPVNRREYGPGQHGQRRKGKM. Positions 94 to 157 constitute an S4 RNA-binding domain; that stretch reads RRLDAVVYRA…KQLASVLEAV (64 aa).

It belongs to the universal ribosomal protein uS4 family. Part of the 30S ribosomal subunit. Contacts protein S5. The interaction surface between S4 and S5 is involved in control of translational fidelity.

Its function is as follows. One of the primary rRNA binding proteins, it binds directly to 16S rRNA where it nucleates assembly of the body of the 30S subunit. In terms of biological role, with S5 and S12 plays an important role in translational accuracy. The protein is Small ribosomal subunit protein uS4 of Ruegeria pomeroyi (strain ATCC 700808 / DSM 15171 / DSS-3) (Silicibacter pomeroyi).